The sequence spans 554 residues: Phospholipase B-like protein E (554 aa).

Positions 1–19 (MKLFILLIVIVFLISNSYS) are cleaved as a signal peptide. Residues asparagine 113, asparagine 140, asparagine 231, asparagine 302, asparagine 340, and asparagine 546 are each glycosylated (N-linked (GlcNAc...) asparagine).

Belongs to the phospholipase B-like family.

It localises to the secreted. Its function is as follows. Probable phospholipase. The polypeptide is Phospholipase B-like protein E (plbE) (Dictyostelium discoideum (Social amoeba)).